Reading from the N-terminus, the 185-residue chain is Ribosome-recycling factor (185 aa).

Belongs to the RRF family.

The protein localises to the cytoplasm. Its function is as follows. Responsible for the release of ribosomes from messenger RNA at the termination of protein biosynthesis. May increase the efficiency of translation by recycling ribosomes from one round of translation to another. This chain is Ribosome-recycling factor, found in Bacillus pumilus (strain SAFR-032).